We begin with the raw amino-acid sequence, 116 residues long: Iron-sulfur cluster insertion protein ErpA (116 aa).

Residues cysteine 44, cysteine 108, and cysteine 110 each contribute to the iron-sulfur cluster site.

The protein belongs to the HesB/IscA family. Homodimer. Requires iron-sulfur cluster as cofactor.

Its function is as follows. Required for insertion of 4Fe-4S clusters for at least IspG. The chain is Iron-sulfur cluster insertion protein ErpA from Nitrosococcus oceani (strain ATCC 19707 / BCRC 17464 / JCM 30415 / NCIMB 11848 / C-107).